A 156-amino-acid polypeptide reads, in one-letter code: Small ribosomal subunit protein uS7 (156 aa).

Belongs to the universal ribosomal protein uS7 family. In terms of assembly, part of the 30S ribosomal subunit. Contacts proteins S9 and S11.

One of the primary rRNA binding proteins, it binds directly to 16S rRNA where it nucleates assembly of the head domain of the 30S subunit. Is located at the subunit interface close to the decoding center, probably blocks exit of the E-site tRNA. This chain is Small ribosomal subunit protein uS7, found in Rhodospirillum centenum (strain ATCC 51521 / SW).